The chain runs to 261 residues: Cytochrome c oxidase subunit 3 (261 aa).

Residues 1-15 (MTHQTHAYHMVNPSP) lie on the Mitochondrial matrix side of the membrane. Residues 16-34 (WPLTGALSALLMTSGLIMW) traverse the membrane as a helical segment. Topologically, residues 35-40 (FHFNSM) are mitochondrial intermembrane. Residues 41–66 (TLLMLGLTTNMLTMYQWWRDIIREST) traverse the membrane as a helical segment. Residues 67–72 (FQGHHT) are Mitochondrial matrix-facing. The chain crosses the membrane as a helical span at residues 73 to 105 (SAVQKGLRYGMILFIISEVLFFTGFFWAFYHSS). At 106–128 (LAPTPELGGCWPPTGIHPLNPLE) the chain is on the mitochondrial intermembrane side. The chain crosses the membrane as a helical span at residues 129-152 (VPLLNTSVLLASGVSITWAHHSLM). Residues 153–155 (EGN) lie on the Mitochondrial matrix side of the membrane. Residues 156-183 (RNHMLQALFITIALGVYFTLLQASEYYE) traverse the membrane as a helical segment. Residues 184 to 190 (APFTISD) lie on the Mitochondrial intermembrane side of the membrane. Residues 191-223 (GVYGSTFFVATGFHGLHVIIGSTFLIVCFFRQL) form a helical membrane-spanning segment. Over 224 to 232 (KFHFTSTHH) the chain is Mitochondrial matrix. A helical transmembrane segment spans residues 233–256 (FGFEAAAWYWHFVDVVWLFLYVSI). Residues 257 to 261 (YWWGS) are Mitochondrial intermembrane-facing.

It belongs to the cytochrome c oxidase subunit 3 family. As to quaternary structure, component of the cytochrome c oxidase (complex IV, CIV), a multisubunit enzyme composed of 14 subunits. The complex is composed of a catalytic core of 3 subunits MT-CO1, MT-CO2 and MT-CO3, encoded in the mitochondrial DNA, and 11 supernumerary subunits COX4I, COX5A, COX5B, COX6A, COX6B, COX6C, COX7A, COX7B, COX7C, COX8 and NDUFA4, which are encoded in the nuclear genome. The complex exists as a monomer or a dimer and forms supercomplexes (SCs) in the inner mitochondrial membrane with NADH-ubiquinone oxidoreductase (complex I, CI) and ubiquinol-cytochrome c oxidoreductase (cytochrome b-c1 complex, complex III, CIII), resulting in different assemblies (supercomplex SCI(1)III(2)IV(1) and megacomplex MCI(2)III(2)IV(2)).

Its subcellular location is the mitochondrion inner membrane. The catalysed reaction is 4 Fe(II)-[cytochrome c] + O2 + 8 H(+)(in) = 4 Fe(III)-[cytochrome c] + 2 H2O + 4 H(+)(out). Its function is as follows. Component of the cytochrome c oxidase, the last enzyme in the mitochondrial electron transport chain which drives oxidative phosphorylation. The respiratory chain contains 3 multisubunit complexes succinate dehydrogenase (complex II, CII), ubiquinol-cytochrome c oxidoreductase (cytochrome b-c1 complex, complex III, CIII) and cytochrome c oxidase (complex IV, CIV), that cooperate to transfer electrons derived from NADH and succinate to molecular oxygen, creating an electrochemical gradient over the inner membrane that drives transmembrane transport and the ATP synthase. Cytochrome c oxidase is the component of the respiratory chain that catalyzes the reduction of oxygen to water. Electrons originating from reduced cytochrome c in the intermembrane space (IMS) are transferred via the dinuclear copper A center (CU(A)) of subunit 2 and heme A of subunit 1 to the active site in subunit 1, a binuclear center (BNC) formed by heme A3 and copper B (CU(B)). The BNC reduces molecular oxygen to 2 water molecules using 4 electrons from cytochrome c in the IMS and 4 protons from the mitochondrial matrix. The sequence is that of Cytochrome c oxidase subunit 3 (MT-CO3) from Damaliscus lunatus (Tsessebe).